Reading from the N-terminus, the 317-residue chain is Tenomodulin (317 aa).

Over 1 to 30 (MAKNPPENCEDCHILNAEAFKSKKICKSLK) the chain is Cytoplasmic. A helical; Signal-anchor for type II membrane protein transmembrane segment spans residues 31–50 (ICGLVFGILALTLIVLFWGS). Residues 51-317 (KHFWPEVPKK…WWVARMLGRV (267 aa)) lie on the Extracellular side of the membrane. Residues 93 to 186 (GNGTDETLEV…ICDNVTMYWI (94 aa)) enclose the BRICHOS domain. N-linked (GlcNAc...) asparagine glycosylation occurs at asparagine 94. Cysteine 120 and cysteine 178 form a disulfide bridge. N-linked (GlcNAc...) asparagine glycosylation occurs at asparagine 180. Serine 239 carries the post-translational modification Phosphoserine.

Belongs to the chondromodulin-1 family. In terms of tissue distribution, highly expressed in hypovascular connective tissues such as tendons. Also has strong expression in adipose tissue.

It is found in the membrane. It localises to the nucleus envelope. The protein localises to the cytoplasm. May be an angiogenesis inhibitor. This Homo sapiens (Human) protein is Tenomodulin (TNMD).